Reading from the N-terminus, the 264-residue chain is Thymidylate synthase (264 aa).

Arg-21 is a dUMP binding site. His-51 contacts (6R)-5,10-methylene-5,6,7,8-tetrahydrofolate. 126 to 127 is a dUMP binding site; sequence RR. Cys-146 functions as the Nucleophile in the catalytic mechanism. Residues 166-169, Asn-177, and 207-209 contribute to the dUMP site; these read RSCD and HLY. Asp-169 contributes to the (6R)-5,10-methylene-5,6,7,8-tetrahydrofolate binding site. Ala-263 is a binding site for (6R)-5,10-methylene-5,6,7,8-tetrahydrofolate.

Belongs to the thymidylate synthase family. Bacterial-type ThyA subfamily. As to quaternary structure, homodimer.

Its subcellular location is the cytoplasm. The catalysed reaction is dUMP + (6R)-5,10-methylene-5,6,7,8-tetrahydrofolate = 7,8-dihydrofolate + dTMP. It participates in pyrimidine metabolism; dTTP biosynthesis. Functionally, catalyzes the reductive methylation of 2'-deoxyuridine-5'-monophosphate (dUMP) to 2'-deoxythymidine-5'-monophosphate (dTMP) while utilizing 5,10-methylenetetrahydrofolate (mTHF) as the methyl donor and reductant in the reaction, yielding dihydrofolate (DHF) as a by-product. This enzymatic reaction provides an intracellular de novo source of dTMP, an essential precursor for DNA biosynthesis. In Hamiltonella defensa subsp. Acyrthosiphon pisum (strain 5AT), this protein is Thymidylate synthase.